The chain runs to 63 residues: 2-hydroxymuconate tautomerase (63 aa).

Pro2 serves as the catalytic Proton acceptor; via imino nitrogen.

It belongs to the 4-oxalocrotonate tautomerase family. Homohexamer.

The catalysed reaction is (2Z,4E)-2-hydroxyhexa-2,4-dienedioate = (3E)-2-oxohex-3-enedioate. The protein operates within aromatic compound metabolism; salicylate degradation. Functionally, catalyzes the ketonization of 2-hydroxymuconate stereoselectively to yield 2-oxo-3-hexenedioate. This Pseudomonas putida (Arthrobacter siderocapsulatus) protein is 2-hydroxymuconate tautomerase (nahJ).